The primary structure comprises 66 residues: Small ribosomal subunit protein bS21 (66 aa).

A disordered region spans residues 47–66; it reads KAQEAARRKRKFARKRMYED. Over residues 53–66 the composition is skewed to basic residues; that stretch reads RRKRKFARKRMYED.

Belongs to the bacterial ribosomal protein bS21 family.

The polypeptide is Small ribosomal subunit protein bS21 (Rickettsia bellii (strain RML369-C)).